The following is a 616-amino-acid chain: MPKYRSHTTTHGRNMAGARALWRATGMTDDDFGKPIIAVVNSFTQFVPGHVHLRDLGKLVAEQIEASGGVAKEFNTIAVDDGIAMGHGGMLYSLPSRELIADSVEYMVNAHCADAMVCISNCDKITPGMLMASLRLNIPVIFVSGGPMEAGKTKLSDKIIKLDLVDAMIQGANPNVSDADSEQIERSACPTCGSCSGMFTANSMNCLNEALGLALPGNGSLLATHADRKQLFLDAGKHIVELTKRYYEQDDISALPRSIANKAAFENAMTLDIAMGGSTNTVLHLLAAAQEGDIDFDISDIDRLSRKVPHLCKVAPSTQKYHMEDVHRAGGVVGILGELDRAGLLNREVKNVLGLNLPQTLEAYDVMLTKDEGVKQMYSAGPAGIRTTKAFSQDCRFPSLDTDRQEGCIRTREHAYSQDGGLAVLYGNLSENGSIVKTAGVDKDSLTFRGPAKVYESQDDAVAAILGGKVVAGDVVVIRYEGPKGGPGMQEMLYPTTYLKSMGLGKSCALLTDGRFSGGTSGLSIGHASPEAASGGLIALVQDGDIIDIDIPNRAMKLDVSDAELAARREAELARGDAAWTPKARERQVSYALRAYALLATSADKGAVRDKSKLGG.

Residue aspartate 81 participates in Mg(2+) binding. Cysteine 122 contributes to the [2Fe-2S] cluster binding site. Residues aspartate 123 and lysine 124 each contribute to the Mg(2+) site. Position 124 is an N6-carboxylysine (lysine 124). Cysteine 195 contributes to the [2Fe-2S] cluster binding site. Glutamate 491 lines the Mg(2+) pocket. Residue serine 517 is the Proton acceptor of the active site.

Belongs to the IlvD/Edd family. Homodimer. [2Fe-2S] cluster is required as a cofactor. Mg(2+) serves as cofactor.

The catalysed reaction is (2R)-2,3-dihydroxy-3-methylbutanoate = 3-methyl-2-oxobutanoate + H2O. It catalyses the reaction (2R,3R)-2,3-dihydroxy-3-methylpentanoate = (S)-3-methyl-2-oxopentanoate + H2O. It functions in the pathway amino-acid biosynthesis; L-isoleucine biosynthesis; L-isoleucine from 2-oxobutanoate: step 3/4. The protein operates within amino-acid biosynthesis; L-valine biosynthesis; L-valine from pyruvate: step 3/4. Its function is as follows. Functions in the biosynthesis of branched-chain amino acids. Catalyzes the dehydration of (2R,3R)-2,3-dihydroxy-3-methylpentanoate (2,3-dihydroxy-3-methylvalerate) into 2-oxo-3-methylpentanoate (2-oxo-3-methylvalerate) and of (2R)-2,3-dihydroxy-3-methylbutanoate (2,3-dihydroxyisovalerate) into 2-oxo-3-methylbutanoate (2-oxoisovalerate), the penultimate precursor to L-isoleucine and L-valine, respectively. The sequence is that of Dihydroxy-acid dehydratase from Yersinia enterocolitica serotype O:8 / biotype 1B (strain NCTC 13174 / 8081).